The chain runs to 368 residues: Histidinol-phosphate aminotransferase (368 aa).

Residue Lys224 is modified to N6-(pyridoxal phosphate)lysine.

Belongs to the class-II pyridoxal-phosphate-dependent aminotransferase family. Histidinol-phosphate aminotransferase subfamily. Homodimer. Pyridoxal 5'-phosphate is required as a cofactor.

The catalysed reaction is L-histidinol phosphate + 2-oxoglutarate = 3-(imidazol-4-yl)-2-oxopropyl phosphate + L-glutamate. It functions in the pathway amino-acid biosynthesis; L-histidine biosynthesis; L-histidine from 5-phospho-alpha-D-ribose 1-diphosphate: step 7/9. This is Histidinol-phosphate aminotransferase from Agrobacterium fabrum (strain C58 / ATCC 33970) (Agrobacterium tumefaciens (strain C58)).